Consider the following 755-residue polypeptide: SWI/SNF-related matrix-associated actin-dependent regulator of chromatin subfamily A-like protein 1 (755 aa).

The stretch at 7-27 (SEIAEKKRIALAKLQAKKSQL) forms a coiled coil. Disordered regions lie at residues 26 to 91 (QLLA…NKSS) and 104 to 134 (SNRE…SLSS). Residues 32–63 (PATNGKSTTSATGATQHANNGKSNPNQPQAKS) show a composition bias toward polar residues. S63 is modified (phosphoserine). Residues 139–217 (PVAVLLGNSI…KPYVHMNGIP (79 aa)) enclose the HARP domain. Residues 256-412 (CFAIAQKGRI…FTQLQMIDGK (157 aa)) form the Helicase ATP-binding domain. Residue 269–276 (DEMGLGKT) coordinates ATP. The DESH box motif lies at 361–364 (DESH). In terms of domain architecture, Helicase C-terminal spans 527–681 (YLKTLVKEQK…NLQKATHTAA (155 aa)).

It belongs to the SNF2/RAD54 helicase family. SMARCAL1 subfamily.

It is found in the nucleus. ATP-dependent annealing helicase that catalyzes the rewinding of the stably unwound DNA. The protein is SWI/SNF-related matrix-associated actin-dependent regulator of chromatin subfamily A-like protein 1 (Marcal1) of Drosophila melanogaster (Fruit fly).